The following is a 127-amino-acid chain: Secreted RxLR effector protein 7 (127 aa).

An N-terminal signal peptide occupies residues methionine 1 to alanine 21. Residues arginine 48–arginine 65 carry the RxLR-dEER motif.

Belongs to the RxLR effector family.

The protein resides in the secreted. It localises to the host nucleus. The protein localises to the host cytoplasm. Its function is as follows. Secreted effector that completely suppresses the host cell death induced by cell death-inducing proteins. The polypeptide is Secreted RxLR effector protein 7 (Plasmopara viticola (Downy mildew of grapevine)).